The following is a 180-amino-acid chain: Peptide deformylase (180 aa).

Fe cation contacts are provided by Cys88 and His130. Residue Glu131 is part of the active site. His134 serves as a coordination point for Fe cation.

Belongs to the polypeptide deformylase family. Fe(2+) serves as cofactor.

The enzyme catalyses N-terminal N-formyl-L-methionyl-[peptide] + H2O = N-terminal L-methionyl-[peptide] + formate. Removes the formyl group from the N-terminal Met of newly synthesized proteins. Requires at least a dipeptide for an efficient rate of reaction. N-terminal L-methionine is a prerequisite for activity but the enzyme has broad specificity at other positions. The polypeptide is Peptide deformylase (Acidothermus cellulolyticus (strain ATCC 43068 / DSM 8971 / 11B)).